We begin with the raw amino-acid sequence, 442 residues long: MQVSRPLTVSASPKGLSGRTRVPGDKSISHRSLMFAALASGRTYVTGLLEGEDVLRTADAMRALGATITREGADWVIEGRGVGALTEPADVLDMGNSGTAARLLSGILSSHAFNSIMTGDASLRSRPMRRVTVPLAANGSEFLTREGGRLPMAIRGTGEAKPIEYRLPVASAQVKSAILLAGLNAHGTTVVEEPVATRDHTENMLRHFGVEVDVSRIDAGGRRIALTGPVQMTARDVTVPGDPSSAAFPIVAALLVPGSDIWIEGVGLNPLRTGLFTTLIEMGASLSIENERVEGGEPVGDLHVRYSKLKGVDVPPERAPSMIDEYPVLAVACAFAEGASRLRGLEELRVKESDRLASTVALLNVNGAETEVIGDDLIVKGYHGPLGGGTVQTHMDHRLAMSAVVLGLAAQKPVNVDDTAFIETSFPGFVDLMNALGAGLTP.

The segment covering 1–11 (MQVSRPLTVSA) has biased composition (polar residues). The interval 1-25 (MQVSRPLTVSASPKGLSGRTRVPGD) is disordered. Residues Lys26, Ser27, and Arg31 each coordinate 3-phosphoshikimate. Lys26 contacts phosphoenolpyruvate. Positions 98 and 126 each coordinate phosphoenolpyruvate. The 3-phosphoshikimate site is built by Ser171, Gln173, Asp324, and Lys351. Gln173 contributes to the phosphoenolpyruvate binding site. The Proton acceptor role is filled by Asp324. The phosphoenolpyruvate site is built by Arg355 and Arg398.

Belongs to the EPSP synthase family. As to quaternary structure, monomer.

It localises to the cytoplasm. The enzyme catalyses 3-phosphoshikimate + phosphoenolpyruvate = 5-O-(1-carboxyvinyl)-3-phosphoshikimate + phosphate. Its pathway is metabolic intermediate biosynthesis; chorismate biosynthesis; chorismate from D-erythrose 4-phosphate and phosphoenolpyruvate: step 6/7. In terms of biological role, catalyzes the transfer of the enolpyruvyl moiety of phosphoenolpyruvate (PEP) to the 5-hydroxyl of shikimate-3-phosphate (S3P) to produce enolpyruvyl shikimate-3-phosphate and inorganic phosphate. The chain is 3-phosphoshikimate 1-carboxyvinyltransferase from Gluconobacter oxydans (strain 621H) (Gluconobacter suboxydans).